The chain runs to 101 residues: Small ribosomal subunit protein uS14 (101 aa).

It belongs to the universal ribosomal protein uS14 family. As to quaternary structure, part of the 30S ribosomal subunit. Contacts proteins S3 and S10.

Functionally, binds 16S rRNA, required for the assembly of 30S particles and may also be responsible for determining the conformation of the 16S rRNA at the A site. The sequence is that of Small ribosomal subunit protein uS14 from Gluconacetobacter diazotrophicus (strain ATCC 49037 / DSM 5601 / CCUG 37298 / CIP 103539 / LMG 7603 / PAl5).